The primary structure comprises 714 residues: Fatty acid oxidation complex subunit alpha (714 aa).

Residues 1–190 (MEMASAFTLN…KLGLVDDVVP (190 aa)) are enoyl-CoA hydratase. Residues 306–714 (APLNSVGILG…FWKTTATDLQ (409 aa)) are 3-hydroxyacyl-CoA dehydrogenase.

This sequence in the N-terminal section; belongs to the enoyl-CoA hydratase/isomerase family. The protein in the central section; belongs to the 3-hydroxyacyl-CoA dehydrogenase family. In terms of assembly, heterotetramer of two alpha chains (FadJ) and two beta chains (FadI).

It localises to the cytoplasm. The enzyme catalyses a (3S)-3-hydroxyacyl-CoA = a (2E)-enoyl-CoA + H2O. It carries out the reaction a 4-saturated-(3S)-3-hydroxyacyl-CoA = a (3E)-enoyl-CoA + H2O. It catalyses the reaction a (3S)-3-hydroxyacyl-CoA + NAD(+) = a 3-oxoacyl-CoA + NADH + H(+). The catalysed reaction is (3S)-3-hydroxybutanoyl-CoA = (3R)-3-hydroxybutanoyl-CoA. It functions in the pathway lipid metabolism; fatty acid beta-oxidation. Its function is as follows. Catalyzes the formation of a hydroxyacyl-CoA by addition of water on enoyl-CoA. Also exhibits 3-hydroxyacyl-CoA epimerase and 3-hydroxyacyl-CoA dehydrogenase activities. In Escherichia coli O17:K52:H18 (strain UMN026 / ExPEC), this protein is Fatty acid oxidation complex subunit alpha.